Consider the following 187-residue polypeptide: Ion-translocating oxidoreductase complex subunit B (187 aa).

The segment at 1–26 is hydrophobic; the sequence is MTHILFAVLVLALLALAFGIILGFAA. Residues 32-90 form the 4Fe-4S domain; that stretch reads EADPIVDQLDALLPQTQCGQCGYPGCKPYAEALANGDQINKCVPGGDATMRKIADLMGV. Positions 49, 52, 57, 73, 115, 118, 121, 125, 145, 148, 151, and 155 each coordinate [4Fe-4S] cluster. 2 4Fe-4S ferredoxin-type domains span residues 106 to 135 and 136 to 165; these read KVAF…GATK and AMHT…MIPV.

Belongs to the 4Fe4S bacterial-type ferredoxin family. RnfB subfamily. As to quaternary structure, the complex is composed of six subunits: RnfA, RnfB, RnfC, RnfD, RnfE and RnfG. [4Fe-4S] cluster serves as cofactor.

Its subcellular location is the cell inner membrane. Functionally, part of a membrane-bound complex that couples electron transfer with translocation of ions across the membrane. This Aeromonas salmonicida (strain A449) protein is Ion-translocating oxidoreductase complex subunit B.